Consider the following 284-residue polypeptide: Shikimate kinase (284 aa).

85-95 (PLAAGLKSSSA) serves as a coordination point for ATP.

This sequence belongs to the GHMP kinase family. Archaeal shikimate kinase subfamily.

It localises to the cytoplasm. The enzyme catalyses shikimate + ATP = 3-phosphoshikimate + ADP + H(+). The protein operates within metabolic intermediate biosynthesis; chorismate biosynthesis; chorismate from D-erythrose 4-phosphate and phosphoenolpyruvate: step 5/7. The protein is Shikimate kinase of Halobacterium salinarum (strain ATCC 29341 / DSM 671 / R1).